An 839-amino-acid chain; its full sequence is MAKQQDQIDKIRQELAQSAIKNISLSSELERSFMEYAMSVIVARALPDARDGLKPVHRRVLYGAYTGGMHHDRPFKKSARIVGDVMSKFHPHGDMAIYDTMSRMAQDFSLRYLLIDGHGNFGSIDGDRPAAQRYTEARLSKLAGELLRDIDKDTVDFVANYDGEEQEPTVLPAAFPNLLANGSSGIAVGMSTSIPSHNLSELIQGLILLIDNPDCTINDLLGVIKGPDFPTGANIIYTKGIESYFETGKGNVVIRSKVSIEQLPTRAALVVTEIPYMVNKTSLIEKIVELVKAEEITGIADIRDESSREGIRLVIEVKRDTVPEVLLNQLFKSTRLQVRFPVNMLALVKGAPKLLNMKQALTVYLEHQLDVLIRKTQFNLKKYQERFHILSGLLIAALNIDEVIAIIKKSANNQVAMEALHERFGLDEIQARAVLDMRLRSLSVLEVNKLQTEQQELKALIEFCQQVLADKQLQLKLIKEQLTKINEQFGDPRRSEILYGISEDIDDEDLITQENVVITMSTNGYLKRIGVDAYNLQHRGGVGVKGLTTYTDDSISQLLVCSTHSDLLFFTDKGKVYRIRAHQIPPGFRTNKGIPAVNLIKIDKDEKICALISVNDYQNGYFFFCTKNGTIKRTSLSEFANILSIGKRAILFKENDVLFSVIRTSGQDDIFIGSTAGFVVRFHEDTVRPLSRAAMGVLGINLNQCEFVNGLSTSSNGSLLLSVGQNGIGKLTSIDKYRLTKRNAKGVKTLRVTAKTGPVVTTTTVFGNEDLLMISSAGKIVRISLEQLSEQRKNTSGVKLIKLKEKERLETVTIFKKEEAIKTTTATETDDVGSKQITQ.

In terms of domain architecture, Topo IIA-type catalytic spans 46–510; that stretch reads LPDARDGLKP…ISEDIDDEDL (465 aa). Tyr-134 serves as the catalytic O-(5'-phospho-DNA)-tyrosine intermediate. The GyrA-box motif lies at 537–543; the sequence is QHRGGVG.

Belongs to the type II topoisomerase GyrA/ParC subunit family. As to quaternary structure, heterotetramer, composed of two GyrA and two GyrB chains. In the heterotetramer, GyrA contains the active site tyrosine that forms a transient covalent intermediate with DNA, while GyrB binds cofactors and catalyzes ATP hydrolysis.

It is found in the cytoplasm. The enzyme catalyses ATP-dependent breakage, passage and rejoining of double-stranded DNA.. A type II topoisomerase that negatively supercoils closed circular double-stranded (ds) DNA in an ATP-dependent manner to modulate DNA topology and maintain chromosomes in an underwound state. Negative supercoiling favors strand separation, and DNA replication, transcription, recombination and repair, all of which involve strand separation. Also able to catalyze the interconversion of other topological isomers of dsDNA rings, including catenanes and knotted rings. Type II topoisomerases break and join 2 DNA strands simultaneously in an ATP-dependent manner. The protein is DNA gyrase subunit A of Mycoplasma pneumoniae (strain ATCC 29342 / M129 / Subtype 1) (Mycoplasmoides pneumoniae).